The primary structure comprises 221 residues: Proteasome subunit beta type-1 (221 aa).

It belongs to the peptidase T1B family. The 26S proteasome consists of a 20S proteasome core and two 19S regulatory subunits. The 20S proteasome core is composed of 28 subunits that are arranged in four stacked rings, resulting in a barrel-shaped structure. The two end rings are each formed by seven alpha subunits, and the two central rings are each formed by seven beta subunits. The catalytic chamber with the active sites is on the inside of the barrel.

The protein resides in the cytoplasm. The protein localises to the nucleus. In terms of biological role, non-catalytic component of the proteasome, a multicatalytic proteinase complex which is characterized by its ability to cleave peptides with Arg, Phe, Tyr, Leu, and Glu adjacent to the leaving group at neutral or slightly basic pH. The proteasome has an ATP-dependent proteolytic activity. In Oryza sativa subsp. japonica (Rice), this protein is Proteasome subunit beta type-1 (PBF1).